The primary structure comprises 200 residues: Small ribosomal subunit protein uS4 (200 aa).

The tract at residues 22-43 is disordered; sequence TGKELERRPYAPGQHGPTQRKK. The S4 RNA-binding domain maps to 92–170; it reads QRLDNIVYRL…VPEYVTFDAE (79 aa).

The protein belongs to the universal ribosomal protein uS4 family. Part of the 30S ribosomal subunit. Contacts protein S5. The interaction surface between S4 and S5 is involved in control of translational fidelity.

Its function is as follows. One of the primary rRNA binding proteins, it binds directly to 16S rRNA where it nucleates assembly of the body of the 30S subunit. In terms of biological role, with S5 and S12 plays an important role in translational accuracy. This is Small ribosomal subunit protein uS4 from Listeria monocytogenes serotype 4a (strain HCC23).